Consider the following 235-residue polypeptide: Probable septum site-determining protein MinC (235 aa).

Residues 104-125 are disordered; it reads KAVRPAPVEPATPSEPPQNANP. Pro residues predominate over residues 110–119; it reads PVEPATPSEP.

This sequence belongs to the MinC family. In terms of assembly, interacts with MinD and FtsZ.

Functionally, cell division inhibitor that blocks the formation of polar Z ring septums. Rapidly oscillates between the poles of the cell to destabilize FtsZ filaments that have formed before they mature into polar Z rings. Prevents FtsZ polymerization. This chain is Probable septum site-determining protein MinC, found in Salmonella agona (strain SL483).